We begin with the raw amino-acid sequence, 381 residues long: Succinyl-diaminopimelate desuccinylase (381 aa).

A Zn(2+)-binding site is contributed by H69. The active site involves D71. Residue D103 coordinates Zn(2+). Catalysis depends on E137, which acts as the Proton acceptor. E138, E166, and H355 together coordinate Zn(2+).

It belongs to the peptidase M20A family. DapE subfamily. In terms of assembly, homodimer. Zn(2+) is required as a cofactor. It depends on Co(2+) as a cofactor.

The enzyme catalyses N-succinyl-(2S,6S)-2,6-diaminopimelate + H2O = (2S,6S)-2,6-diaminopimelate + succinate. The protein operates within amino-acid biosynthesis; L-lysine biosynthesis via DAP pathway; LL-2,6-diaminopimelate from (S)-tetrahydrodipicolinate (succinylase route): step 3/3. In terms of biological role, catalyzes the hydrolysis of N-succinyl-L,L-diaminopimelic acid (SDAP), forming succinate and LL-2,6-diaminopimelate (DAP), an intermediate involved in the bacterial biosynthesis of lysine and meso-diaminopimelic acid, an essential component of bacterial cell walls. In Rickettsia akari (strain Hartford), this protein is Succinyl-diaminopimelate desuccinylase.